The chain runs to 453 residues: Aryl hydrocarbon receptor nuclear translocator homolog (453 aa).

Residues 44–97 enclose the bHLH domain; the sequence is FARENHSEIERRRRNKMTHYINELAEMVPQCASLGRKPDKLTILRMAVSHMKGI. 2 PAS domains span residues 115–193 and 277–347; these read DQEL…LDLK and ASMP…LSDQ. Positions 348–392 constitute a PAC domain; the sequence is PMRINIRVRTSTDYIPCTVSAYKFMNPYSEQFEYVVATHQIAPQE. Residues 410 to 453 form a disordered region; sequence EFGELGGAPSAVDYGQSSSGGWRPEAQGAPQAQWQWDPMNGYNQ.

In terms of assembly, interacts with hif-1. Heterodimer; efficient DNA binding requires dimerization with another bHLH protein. Forms a heterodimer with ahr-1; binds DNA as heterodimer. Forms a heterodimer with PAS domain-containing protein cky-1; binds DNA as heterodimer. As to expression, expressed in many cell types throughout development, including hypodermal cells, intestinal cells, pharyngeal cells, and neurons. Expressed in every cell during embryo.

The protein resides in the nucleus. Functionally, transcription factor. Efficient DNA binding requires dimerization with another bHLH protein, such as cky-1 or ahr-1. Regulates transcription of target genes, probably acting in complex with cky-1. Has a role in cellular differentiation. Required for pharyngeal development. In collaboration with ahr-1 it is involved in RMEL/R and SDQR neuron cell migration. Acts in the cellular response to hypoxia. Involved in aggregation behavior by regulating soluble guanylate cyclase gene expression in the URX neurons. This Caenorhabditis elegans protein is Aryl hydrocarbon receptor nuclear translocator homolog.